The primary structure comprises 208 residues: Large ribosomal subunit protein bL25 (208 aa).

It belongs to the bacterial ribosomal protein bL25 family. CTC subfamily. In terms of assembly, part of the 50S ribosomal subunit; part of the 5S rRNA/L5/L18/L25 subcomplex. Contacts the 5S rRNA. Binds to the 5S rRNA independently of L5 and L18.

Functionally, this is one of the proteins that binds to the 5S RNA in the ribosome where it forms part of the central protuberance. The protein is Large ribosomal subunit protein bL25 of Leptothrix cholodnii (strain ATCC 51168 / LMG 8142 / SP-6) (Leptothrix discophora (strain SP-6)).